A 617-amino-acid polypeptide reads, in one-letter code: UvrABC system protein C (617 aa).

The region spanning 12 to 91 is the GIY-YIG domain; sequence EKPGVYLMKD…IKKYKPKYNV (80 aa). Residues 203-238 form the UVR domain; sequence EWLVEKLKEEMQKAADELRFEEAARLRDQIFAIEKI.

Belongs to the UvrC family. In terms of assembly, interacts with UvrB in an incision complex.

The protein resides in the cytoplasm. In terms of biological role, the UvrABC repair system catalyzes the recognition and processing of DNA lesions. UvrC both incises the 5' and 3' sides of the lesion. The N-terminal half is responsible for the 3' incision and the C-terminal half is responsible for the 5' incision. The protein is UvrABC system protein C of Caldanaerobacter subterraneus subsp. tengcongensis (strain DSM 15242 / JCM 11007 / NBRC 100824 / MB4) (Thermoanaerobacter tengcongensis).